A 396-amino-acid chain; its full sequence is 1-deoxy-D-xylulose 5-phosphate reductoisomerase (396 aa).

NADPH-binding residues include T13, G14, S15, I16, and N127. Position 128 (K128) interacts with 1-deoxy-D-xylulose 5-phosphate. Position 129 (E129) interacts with NADPH. Position 153 (D153) interacts with Mn(2+). Residues S154, E155, S184, and H207 each coordinate 1-deoxy-D-xylulose 5-phosphate. E155 is a Mn(2+) binding site. G213 provides a ligand contact to NADPH. Residues S220, N225, K226, and E229 each coordinate 1-deoxy-D-xylulose 5-phosphate. E229 lines the Mn(2+) pocket.

Belongs to the DXR family. It depends on Mg(2+) as a cofactor. Mn(2+) is required as a cofactor.

It catalyses the reaction 2-C-methyl-D-erythritol 4-phosphate + NADP(+) = 1-deoxy-D-xylulose 5-phosphate + NADPH + H(+). It functions in the pathway isoprenoid biosynthesis; isopentenyl diphosphate biosynthesis via DXP pathway; isopentenyl diphosphate from 1-deoxy-D-xylulose 5-phosphate: step 1/6. With respect to regulation, inhibited by fosmidomycin and 3-(N-acetyl-N-hydroxyamino)-propylphosphonic acid (FR-900098). Catalyzes the NADPH-dependent rearrangement and reduction of 1-deoxy-D-xylulose-5-phosphate (DXP) to 2-C-methyl-D-erythritol 4-phosphate (MEP). The polypeptide is 1-deoxy-D-xylulose 5-phosphate reductoisomerase (Pseudomonas aeruginosa (strain ATCC 15692 / DSM 22644 / CIP 104116 / JCM 14847 / LMG 12228 / 1C / PRS 101 / PAO1)).